A 264-amino-acid polypeptide reads, in one-letter code: Major prion protein (264 aa).

Positions 1–24 (MVKSHIGSWILVLFVAMWSDVGLC) are cleaved as a signal peptide. An interaction with GRB2, ERI3 and SYN1 region spans residues 25 to 241 (KKRPKPGGGW…ESQAYYQRGA (217 aa)). The interval 28-118 (PKPGGGWNTG…QWNKPSKPKT (91 aa)) is disordered. Low complexity predominate over residues 37–54 (GGSRYPGPGSPGGNRYPP). 6 consecutive repeat copies span residues 54 to 62 (PQGGGGWGQ), 63 to 70 (PHGGGWGQ), 71 to 78 (PHGGGWGQ), 79 to 86 (PHGGGWGQ), 87 to 94 (PHGGGWGQ), and 95 to 103 (PHGGGGWGQ). Positions 54–103 (PQGGGGWGQPHGGGWGQPHGGGWGQPHGGGWGQPHGGGWGQPHGGGGWGQ) are 6 X 8 AA tandem repeats of P-H-G-G-G-W-G-Q. A compositionally biased stretch (gly residues) spans 55 to 107 (QGGGGWGQPHGGGWGQPHGGGWGQPHGGGWGQPHGGGWGQPHGGGGWGQGGTH). His-72, Gly-73, Gly-74, His-80, Gly-81, Gly-82, His-88, Gly-89, Gly-90, His-96, and Gly-98 together coordinate Cu(2+). A disulfide bridge links Cys-190 with Cys-225. Residues Asn-192 and Asn-208 are each glycosylated (N-linked (GlcNAc...) asparagine). Ala-241 carries the GPI-anchor amidated alanine lipid modification. A propeptide spans 242–264 (SVILFSSPPVILLISFLIFLIVG) (removed in mature form).

Belongs to the prion family. As to quaternary structure, monomer and homodimer. Has a tendency to aggregate into amyloid fibrils containing a cross-beta spine, formed by a steric zipper of superposed beta-strands. Soluble oligomers may represent an intermediate stage on the path to fibril formation. Copper binding may promote oligomerization. Interacts with GRB2, APP, ERI3/PRNPIP and SYN1. Mislocalized cytosolically exposed PrP interacts with MGRN1; this interaction alters MGRN1 subcellular location and causes lysosomal enlargement. Interacts with KIAA1191.

It localises to the cell membrane. Its subcellular location is the golgi apparatus. Its function is as follows. Its primary physiological function is unclear. Has cytoprotective activity against internal or environmental stresses. May play a role in neuronal development and synaptic plasticity. May be required for neuronal myelin sheath maintenance. May play a role in iron uptake and iron homeostasis. Soluble oligomers are toxic to cultured neuroblastoma cells and induce apoptosis (in vitro). Association with GPC1 (via its heparan sulfate chains) targets PRNP to lipid rafts. Also provides Cu(2+) or Zn(2+) for the ascorbate-mediated GPC1 deaminase degradation of its heparan sulfate side chains. This Ailuropoda melanoleuca (Giant panda) protein is Major prion protein (PRNP).